Consider the following 257-residue polypeptide: Ribonuclease PH (257 aa).

Residues R86 and 124–126 contribute to the phosphate site; that span reads GTR.

It belongs to the RNase PH family. Homohexameric ring arranged as a trimer of dimers.

The catalysed reaction is tRNA(n+1) + phosphate = tRNA(n) + a ribonucleoside 5'-diphosphate. Functionally, phosphorolytic 3'-5' exoribonuclease that plays an important role in tRNA 3'-end maturation. Removes nucleotide residues following the 3'-CCA terminus of tRNAs; can also add nucleotides to the ends of RNA molecules by using nucleoside diphosphates as substrates, but this may not be physiologically important. Probably plays a role in initiation of 16S rRNA degradation (leading to ribosome degradation) during starvation. This is Ribonuclease PH from Halalkalibacterium halodurans (strain ATCC BAA-125 / DSM 18197 / FERM 7344 / JCM 9153 / C-125) (Bacillus halodurans).